Here is a 147-residue protein sequence, read N- to C-terminus: 3-dehydroquinate dehydratase (147 aa).

Tyr-24 serves as the catalytic Proton acceptor. Substrate contacts are provided by Asn-75, His-81, and Asp-88. His-101 serves as the catalytic Proton donor. Substrate contacts are provided by residues 102 to 103 and Arg-112; that span reads IS.

This sequence belongs to the type-II 3-dehydroquinase family. As to quaternary structure, homododecamer.

The enzyme catalyses 3-dehydroquinate = 3-dehydroshikimate + H2O. Its pathway is metabolic intermediate biosynthesis; chorismate biosynthesis; chorismate from D-erythrose 4-phosphate and phosphoenolpyruvate: step 3/7. Functionally, catalyzes a trans-dehydration via an enolate intermediate. The chain is 3-dehydroquinate dehydratase from Cereibacter sphaeroides (strain ATCC 17029 / ATH 2.4.9) (Rhodobacter sphaeroides).